The chain runs to 174 residues: Transcriptional repressor NrdR (174 aa).

The segment at 3–34 (CPICHFPETDVIDTRKLYEGEVIRRRRKCRAC) is a zinc-finger region. One can recognise an ATP-cone domain in the interval 49 to 139 (LMVVKKDGTR…VYRSFADIGK (91 aa)). The segment at 151–174 (EGTRNGHSSAATTDQGTTDNHSRM) is disordered. Positions 155–174 (NGHSSAATTDQGTTDNHSRM) are enriched in polar residues.

The protein belongs to the NrdR family. It depends on Zn(2+) as a cofactor.

Functionally, negatively regulates transcription of bacterial ribonucleotide reductase nrd genes and operons by binding to NrdR-boxes. The protein is Transcriptional repressor NrdR of Chloroflexus aggregans (strain MD-66 / DSM 9485).